A 276-amino-acid chain; its full sequence is Large ribosomal subunit protein uL2 (276 aa).

The span at 28–38 (RPEKSLTEKLS) shows a compositional bias: basic and acidic residues. 2 disordered regions span residues 28 to 57 (RPEKSLTEKLSKKGGRNNQGRLTVRHQGGG) and 219 to 276 (TVRG…RRKK).

This sequence belongs to the universal ribosomal protein uL2 family. As to quaternary structure, part of the 50S ribosomal subunit. Forms a bridge to the 30S subunit in the 70S ribosome.

In terms of biological role, one of the primary rRNA binding proteins. Required for association of the 30S and 50S subunits to form the 70S ribosome, for tRNA binding and peptide bond formation. It has been suggested to have peptidyltransferase activity; this is somewhat controversial. Makes several contacts with the 16S rRNA in the 70S ribosome. This chain is Large ribosomal subunit protein uL2, found in Exiguobacterium sp. (strain ATCC BAA-1283 / AT1b).